A 334-amino-acid polypeptide reads, in one-letter code: Forkhead box protein N2 (334 aa).

2 disordered regions span residues 1–52 and 83–108; these read MGPV…SGTT and SPLYDIEGDLSPSGCQTPEKLSASSK. The fork-head DNA-binding region spans 108–204; the sequence is KPPYSFSLLI…QALKKQPFSS (97 aa).

It localises to the nucleus. This Xenopus tropicalis (Western clawed frog) protein is Forkhead box protein N2.